The sequence spans 123 residues: Large ribosomal subunit protein bL20 (123 aa).

Over residues 1 to 15 the composition is skewed to basic residues; it reads MARVKRSVNAKKKRR. The interval 1 to 23 is disordered; sequence MARVKRSVNAKKKRREVLDQASG.

This sequence belongs to the bacterial ribosomal protein bL20 family.

Binds directly to 23S ribosomal RNA and is necessary for the in vitro assembly process of the 50S ribosomal subunit. It is not involved in the protein synthesizing functions of that subunit. In Cutibacterium acnes (strain DSM 16379 / KPA171202) (Propionibacterium acnes), this protein is Large ribosomal subunit protein bL20.